We begin with the raw amino-acid sequence, 354 residues long: MGNCLSSSDQKEAKDRSVAIDKQIEEDSRKFKKECKILLLGSGESGKSTIVKQMKIIHQNGYTKDELLLYRLTVIKNLVDSAQAMVLALRKFKMEPEMPENRENVDAILQYRVDADPGATLDHAMARKVDSLWKDPIVPAIMERSSEFYLMDSAAYFFDNVNRIGQSDYVPNENDVLRARSKTTGISETRFNMGQLSIHLFDVGGQRSERKKWIHCFEAVTSIIFCVALSEYDQVLLEESGQNRMAESLVLFESVVNSRWFLRTSVILFLNKIDIFKQKIPKQPLSKYFPEYSGGPDINKAAKYILWRFTQTNRARLSIYPHLTQATDTSNIRLVFAAVKETILTNALKDSGIL.

Gly2 carries the N-myristoyl glycine lipid modification. Cys4 carries the S-palmitoyl cysteine lipid modification. Residues 33 to 354 (KECKILLLGS…TNALKDSGIL (322 aa)) enclose the G-alpha domain. Residues 36–49 (KILLLGSGESGKST) form a G1 motif region. Residues 41–48 (GSGESGKS), 177–183 (LRARSKT), 202–206 (DVGGQ), 271–274 (NKID), and Ala326 contribute to the GTP site. The Mg(2+) site is built by Ser48 and Thr183. Residues 175-183 (DVLRARSKT) form a G2 motif region. The tract at residues 198 to 207 (IHLFDVGGQR) is G3 motif. Positions 267–274 (ILFLNKID) are G4 motif. The G5 motif stretch occupies residues 324 to 329 (TQATDT).

Belongs to the G-alpha family. As to quaternary structure, g proteins are composed of 3 units; alpha, beta and gamma. The alpha chain contains the guanine nucleotide binding site.

In terms of biological role, guanine nucleotide-binding proteins (G proteins) are involved as modulators or transducers in various transmembrane signaling systems. GPA3 plays an active role in transmission of the pheromone signal. The protein is Guanine nucleotide-binding protein alpha-3 subunit (GPA3) of Mycosarcoma maydis (Corn smut fungus).